The primary structure comprises 405 residues: Arginine biosynthesis bifunctional protein ArgJ (405 aa).

6 residues coordinate substrate: threonine 167, lysine 190, threonine 201, glutamate 281, asparagine 400, and serine 405. Catalysis depends on threonine 201, which acts as the Nucleophile.

The protein belongs to the ArgJ family. In terms of assembly, heterotetramer of two alpha and two beta chains.

The protein localises to the cytoplasm. It catalyses the reaction N(2)-acetyl-L-ornithine + L-glutamate = N-acetyl-L-glutamate + L-ornithine. The catalysed reaction is L-glutamate + acetyl-CoA = N-acetyl-L-glutamate + CoA + H(+). It participates in amino-acid biosynthesis; L-arginine biosynthesis; L-ornithine and N-acetyl-L-glutamate from L-glutamate and N(2)-acetyl-L-ornithine (cyclic): step 1/1. The protein operates within amino-acid biosynthesis; L-arginine biosynthesis; N(2)-acetyl-L-ornithine from L-glutamate: step 1/4. Its function is as follows. Catalyzes two activities which are involved in the cyclic version of arginine biosynthesis: the synthesis of N-acetylglutamate from glutamate and acetyl-CoA as the acetyl donor, and of ornithine by transacetylation between N(2)-acetylornithine and glutamate. The chain is Arginine biosynthesis bifunctional protein ArgJ from Nocardia farcinica (strain IFM 10152).